Consider the following 747-residue polypeptide: DNA ligase (747 aa).

Residues 113–117, 161–162, and glutamate 190 each bind NAD(+); these read DRAYD and SI. Residue lysine 192 is the N6-AMP-lysine intermediate of the active site. NAD(+) is bound by residues arginine 213, glutamate 249, lysine 364, and lysine 388. Zn(2+) contacts are provided by cysteine 479, cysteine 482, cysteine 495, and cysteine 501. Residues 660 to 747 enclose the BRCT domain; it reads TTNAPLSDLT…EHDDTLTWPP (88 aa).

The protein belongs to the NAD-dependent DNA ligase family. LigA subfamily. Requires Mg(2+) as cofactor. The cofactor is Mn(2+).

The catalysed reaction is NAD(+) + (deoxyribonucleotide)n-3'-hydroxyl + 5'-phospho-(deoxyribonucleotide)m = (deoxyribonucleotide)n+m + AMP + beta-nicotinamide D-nucleotide.. Functionally, DNA ligase that catalyzes the formation of phosphodiester linkages between 5'-phosphoryl and 3'-hydroxyl groups in double-stranded DNA using NAD as a coenzyme and as the energy source for the reaction. It is essential for DNA replication and repair of damaged DNA. The polypeptide is DNA ligase (Haloquadratum walsbyi (strain DSM 16790 / HBSQ001)).